The chain runs to 771 residues: DNA polymerase 1 (771 aa).

It belongs to the DNA polymerase type-B family.

It catalyses the reaction DNA(n) + a 2'-deoxyribonucleoside 5'-triphosphate = DNA(n+1) + diphosphate. This is DNA polymerase 1 (polI) from Pyrococcus abyssi (strain GE5 / Orsay).